Here is a 116-residue protein sequence, read N- to C-terminus: Vesicle-associated membrane protein 5 (116 aa).

Residues 1 to 72 lie on the Cytoplasmic side of the membrane; that stretch reads MAGKELERCQ…RWENARCRIY (72 aa). Positions 5–65 constitute a v-SNARE coiled-coil homology domain; it reads ELERCQRQAD…KTLAQKKRWE (61 aa). Phosphoserine occurs at positions 41, 48, and 49. The chain crosses the membrane as a helical; Anchor for type IV membrane protein span at residues 73-93; it reads MGLAVGIALLILLIVLLVIFL. The Vesicular portion of the chain corresponds to 94-116; the sequence is PQSSKGSSAPQVQDAGPASGPGE. The disordered stretch occupies residues 97-116; the sequence is SKGSSAPQVQDAGPASGPGE.

The protein belongs to the synaptobrevin family.

The protein localises to the cell membrane. It localises to the endomembrane system. Its subcellular location is the golgi apparatus. It is found in the trans-Golgi network membrane. In terms of biological role, may participate in trafficking events that are associated with myogenesis, such as myoblast fusion and/or GLUT4 trafficking. The protein is Vesicle-associated membrane protein 5 (VAMP5) of Bos taurus (Bovine).